Reading from the N-terminus, the 254-residue chain is Acetyl-coenzyme A carboxylase carboxyl transferase subunit beta (254 aa).

The region spanning 1-254 is the CoA carboxyltransferase N-terminal domain; the sequence is MWLRCPHCHQ…LLKTGSVANE (254 aa). Cysteine 5, cysteine 8, cysteine 23, and cysteine 26 together coordinate Zn(2+). The segment at 5-26 adopts a C4-type zinc-finger fold; sequence CPHCHQLLFAKQLTQYAVCPNC.

It belongs to the AccD/PCCB family. As to quaternary structure, acetyl-CoA carboxylase is a heterohexamer composed of biotin carboxyl carrier protein (AccB), biotin carboxylase (AccC) and two subunits each of ACCase subunit alpha (AccA) and ACCase subunit beta (AccD). The cofactor is Zn(2+).

The protein resides in the cytoplasm. It catalyses the reaction N(6)-carboxybiotinyl-L-lysyl-[protein] + acetyl-CoA = N(6)-biotinyl-L-lysyl-[protein] + malonyl-CoA. The protein operates within lipid metabolism; malonyl-CoA biosynthesis; malonyl-CoA from acetyl-CoA: step 1/1. Component of the acetyl coenzyme A carboxylase (ACC) complex. Biotin carboxylase (BC) catalyzes the carboxylation of biotin on its carrier protein (BCCP) and then the CO(2) group is transferred by the transcarboxylase to acetyl-CoA to form malonyl-CoA. The chain is Acetyl-coenzyme A carboxylase carboxyl transferase subunit beta from Limosilactobacillus reuteri (strain DSM 20016) (Lactobacillus reuteri).